The following is a 280-amino-acid chain: Chorismate mutase (280 aa).

Residues 3 to 256 form the Chorismate mutase domain; that stretch reads FMKPETVLDL…EVDYLLRRLE (254 aa). Positions 73, 74, 137, 139, and 140 each coordinate L-tyrosine. Residues N137, G139, and S140 each coordinate L-tryptophan.

In terms of assembly, homodimer.

It localises to the cytoplasm. The catalysed reaction is chorismate = prephenate. Its pathway is metabolic intermediate biosynthesis; prephenate biosynthesis; prephenate from chorismate: step 1/1. Each dimer has two allosteric binding sites that can bind the regulatory effectors tryptophan or tyrosine. Can bind either one tryptophan or one tyrosine, two tryptophan or two tyrosine or one tryptophan and one tyrosine, which differentially affect the catalytic activity. Activated by tryptophan and subject to feedback inhibition by tyrosine. In the presence of both tryptophan and tyrosine, the enzyme is in the activated state. Its function is as follows. Catalyzes the Claisen rearrangement of chorismate to prephenate. Acts at the first branch point in the aromatic amino acid pathway where it steers biosynthesis towards phenylalanine and tyrosine, and away from tryptophan. The sequence is that of Chorismate mutase from Pichia angusta (Yeast).